The chain runs to 542 residues: MARYVFITGGVVSSLGKGIAAAALAALLQARGYRVRIRKLDPYLNVDPGTMSPYQHGEVFVTDDGAETDLDLGHYERFTGRPANQQDNITTGRIYRNIIEKERRGDYLGATVQVIPHVTDEIKNFVLQGNEDYDFVLCEIGGTVGDIEAMPFLEAIRQLGNELPRGTAVYIHLTLMPYIPAAGELKTKPTQHSVKELRSIGIAPDILLVRADREIPESERRKLSLFCNVRESAVIQALDVATIYDVPIAYHKEGLDSEVLSAFGIDPAPKPRMDRWEEVSHRLHNPEGEVTIAVVGKYTGLKDAYKSLIEALHHGGLANKVKVNLDWIEAEVFESEDPAPYLEKVHGILVPGGFGERGAEGKILAAKFARERKVPYFGICFGMQMACIEAARNLVGIEDASSSEFGPTREPVVGLMTEWLKGNMLEKRAAAGDLGGTMRLGAYEAVLKPDSKIAQIYGSTDIHERHRHRYEVNIDYKDRLEAAGLNFAGMSPDGVLPETVEYADHPWFIGVQYHPELKSRPFEPHPLFASFIEAAIEQSRLV.

The tract at residues 1-265 is amidoligase domain; it reads MARYVFITGG…DSEVLSAFGI (265 aa). Serine 13 lines the CTP pocket. Serine 13 is a binding site for UTP. 14–19 contributes to the ATP binding site; it reads SLGKGI. Residue tyrosine 54 coordinates L-glutamine. Aspartate 71 serves as a coordination point for ATP. Mg(2+) contacts are provided by aspartate 71 and glutamate 139. CTP-binding positions include 146–148, 186–191, and lysine 222; these read DIE and KTKPTQ. UTP-binding positions include 186–191 and lysine 222; that span reads KTKPTQ. The 251-residue stretch at 291–541 folds into the Glutamine amidotransferase type-1 domain; that stretch reads TIAVVGKYTG…IEAAIEQSRL (251 aa). Glycine 353 contacts L-glutamine. Cysteine 380 (nucleophile; for glutamine hydrolysis) is an active-site residue. L-glutamine-binding positions include 381–384, glutamate 404, and arginine 469; that span reads FGMQ. Catalysis depends on residues histidine 514 and glutamate 516.

It belongs to the CTP synthase family. In terms of assembly, homotetramer.

It carries out the reaction UTP + L-glutamine + ATP + H2O = CTP + L-glutamate + ADP + phosphate + 2 H(+). The enzyme catalyses L-glutamine + H2O = L-glutamate + NH4(+). The catalysed reaction is UTP + NH4(+) + ATP = CTP + ADP + phosphate + 2 H(+). Its pathway is pyrimidine metabolism; CTP biosynthesis via de novo pathway; CTP from UDP: step 2/2. Its activity is regulated as follows. Allosterically activated by GTP, when glutamine is the substrate; GTP has no effect on the reaction when ammonia is the substrate. The allosteric effector GTP functions by stabilizing the protein conformation that binds the tetrahedral intermediate(s) formed during glutamine hydrolysis. Inhibited by the product CTP, via allosteric rather than competitive inhibition. Catalyzes the ATP-dependent amination of UTP to CTP with either L-glutamine or ammonia as the source of nitrogen. Regulates intracellular CTP levels through interactions with the four ribonucleotide triphosphates. The sequence is that of CTP synthase from Brucella suis (strain ATCC 23445 / NCTC 10510).